The following is a 710-amino-acid chain: mRNA export factor crp79 (710 aa).

2 consecutive RRM domains span residues 19 to 102 (IYVG…KLTI) and 222 to 292 (HFKQ…PTTP). A compositionally biased stretch (polar residues) spans 333–348 (QWGSVSTTGVSNQQNH). Residues 333 to 357 (QWGSVSTTGVSNQQNHPAAWNPDNK) form a disordered region. An RRM 3 domain is found at 401–474 (EDLFSPFGSI…DRIRRLQAFF (74 aa)). Positions 502-524 (TIRKPIESSTNKISENPTTLSSK) are enriched in polar residues. The segment at 502–544 (TIRKPIESSTNKISENPTTLSSKVENKNEPKTGENKEPSQTNE) is disordered. Residues 525-538 (VENKNEPKTGENKE) show a composition bias toward basic and acidic residues.

The protein resides in the cytoplasm. It localises to the nucleus. Its function is as follows. Binds the poly(A) tail of mRNA. Involved in the export of mRNA from the nucleus to the cytoplasm. The polypeptide is mRNA export factor crp79 (crp79) (Schizosaccharomyces pombe (strain 972 / ATCC 24843) (Fission yeast)).